A 601-amino-acid polypeptide reads, in one-letter code: MVMLRTSFPSGSRTKAVRYHTLLRPILQQRFLRACFALLCLCCITSYWFSSGPFISLSFWFLSLVRGFVCFFFMFPYFVMLKSRMSTQKVTKQSLGAQLFYDFSPKSFFLVYLTFAVSVSCLCLFYIKGHASSIRLQWIASPNAYELPSLNERFVYMTYFSHILILALTVEHLYLQRDSPSRPVINVSFFNYIFQNLGWLIRFSFRKSIICCLFTPFSYAILRSYIWRFAALLTSCCRRIAYTKTPPKWPLSLRLLLHSFWMAFIVCLTFQIALLIFRVFLYSGPMIRGKLLSARSNDPNGTLVDGMKTKKKPLTECIATEELWFIAKRDPQRIKSIFQDIDRSVSIWQELYSITESRCKELATSLKILQSTGDFSAATSKKSGLTKKTNIPYSPNSNHEEINSIPLRNKNIFVPPSQGHSPLLEKIKKQGSLPSTTPVNEGGISDIIPKSLYDQVIRFISTFYKAPVFGIFRKTLRRQNEALLPNPWLFCVTVNSLTQLVLKSLKYDTYGVVARDISSILAVYCDTFDVLVSYKRSLVKNHSNSTNLDDDFKNLNSAANALHCGIIDITEKFQDFFTQLNLSPRIERRCWVLFREYKSNS.

At 1–34 the chain is on the cytoplasmic side; it reads MVMLRTSFPSGSRTKAVRYHTLLRPILQQRFLRA. A helical transmembrane segment spans residues 35–55; the sequence is CFALLCLCCITSYWFSSGPFI. Residues 56–58 lie on the Perinuclear space side of the membrane; it reads SLS. A helical membrane pass occupies residues 59–79; sequence FWFLSLVRGFVCFFFMFPYFV. Residues 80 to 106 are Cytoplasmic-facing; that stretch reads MLKSRMSTQKVTKQSLGAQLFYDFSPK. Residues 107-127 form a helical membrane-spanning segment; sequence SFFLVYLTFAVSVSCLCLFYI. Topologically, residues 128-153 are perinuclear space; the sequence is KGHASSIRLQWIASPNAYELPSLNER. The helical transmembrane segment at 154–174 threads the bilayer; the sequence is FVYMTYFSHILILALTVEHLY. Residues 175–182 lie on the Cytoplasmic side of the membrane; it reads LQRDSPSR. The helical transmembrane segment at 183-203 threads the bilayer; that stretch reads PVINVSFFNYIFQNLGWLIRF. At 204 to 256 the chain is on the perinuclear space side; that stretch reads SFRKSIICCLFTPFSYAILRSYIWRFAALLTSCCRRIAYTKTPPKWPLSLRLL. A helical membrane pass occupies residues 257–277; it reads LHSFWMAFIVCLTFQIALLIF. The Cytoplasmic segment spans residues 278–601; it reads RVFLYSGPMI…VLFREYKSNS (324 aa).

It belongs to the NDC1 family. Component of the nuclear pore complex (NPC). NPC constitutes the exclusive means of nucleocytoplasmic transport. NPCs allow the passive diffusion of ions and small molecules and the active, nuclear transport receptor-mediated bidirectional transport of macromolecules such as proteins, RNAs, ribonucleoparticles (RNPs), and ribosomal subunits across the nuclear envelope. Due to its 8-fold rotational symmetry, all subunits are present with 8 copies or multiples thereof.

It is found in the nucleus. The protein localises to the nuclear pore complex. The protein resides in the nucleus membrane. Its subcellular location is the cytoplasm. It localises to the cytoskeleton. It is found in the microtubule organizing center. The protein localises to the spindle pole body. Functionally, component of the nuclear pore complex (NPC) and the spindle pole body (SPB), which plays a key role in de novo assembly and insertion of both structures in the nuclear envelope. Involved in the formation of the bipolar mitotic spindle. Anchors the spindle pole body in the nuclear envelope. This is Nuclear envelope protein ndc1 (cut11) from Schizosaccharomyces pombe (strain 972 / ATCC 24843) (Fission yeast).